An 884-amino-acid chain; its full sequence is Alanine--tRNA ligase (884 aa).

Positions 568, 572, 670, and 674 each coordinate Zn(2+).

Belongs to the class-II aminoacyl-tRNA synthetase family. Requires Zn(2+) as cofactor.

It is found in the cytoplasm. The enzyme catalyses tRNA(Ala) + L-alanine + ATP = L-alanyl-tRNA(Ala) + AMP + diphosphate. Its function is as follows. Catalyzes the attachment of alanine to tRNA(Ala) in a two-step reaction: alanine is first activated by ATP to form Ala-AMP and then transferred to the acceptor end of tRNA(Ala). Also edits incorrectly charged Ser-tRNA(Ala) and Gly-tRNA(Ala) via its editing domain. The sequence is that of Alanine--tRNA ligase from Synechococcus sp. (strain JA-2-3B'a(2-13)) (Cyanobacteria bacterium Yellowstone B-Prime).